A 179-amino-acid polypeptide reads, in one-letter code: MAEAPASPGGGGGSHESGSPRGGGGGGSVREQDRFLPIANISRIMKKAIPANGKIAKDAKETVQECVSEFISFITSEASDKCQREKRKTINGDDLLWAMATLGFEDYIEPLKVYLQKYREMEGDSKLTAKSSDGSIKKDALGHVGASSSAAEGMGQQGAYNQGMGYMQPQYHNGDISNV.

Positions 1–32 (MAEAPASPGGGGGSHESGSPRGGGGGGSVREQ) are disordered. A compositionally biased stretch (gly residues) spans 8-28 (PGGGGGSHESGSPRGGGGGGS). The DNA-binding element occupies 36–42 (LPIANIS). A subunit association domain (SAD) region spans residues 63–74 (VQECVSEFISFI). The disordered stretch occupies residues 147–179 (SSSAAEGMGQQGAYNQGMGYMQPQYHNGDISNV).

The protein belongs to the NFYB/HAP3 subunit family. In terms of assembly, heterotrimeric transcription factor composed of three components, NF-YA, NF-YB and NF-YC. NF-YB and NF-YC must interact and dimerize for NF-YA association and DNA binding.

It is found in the nucleus. Component of the NF-Y/HAP transcription factor complex. The NF-Y complex stimulates the transcription of various genes by recognizing and binding to a CCAAT motif in promoters. The protein is Nuclear transcription factor Y subunit B (NFY2) of Zea mays (Maize).